Here is a 488-residue protein sequence, read N- to C-terminus: Malonate-semialdehyde dehydrogenase 2 (488 aa).

Phe155, Lys179, Glu182, Arg183, and Ser232 together coordinate NAD(+). Cys287 acts as the Nucleophile in catalysis. Glu387 contributes to the NAD(+) binding site.

It belongs to the aldehyde dehydrogenase family. IolA subfamily. As to quaternary structure, homotetramer.

It carries out the reaction 3-oxopropanoate + NAD(+) + CoA + H2O = hydrogencarbonate + acetyl-CoA + NADH + H(+). It catalyses the reaction 2-methyl-3-oxopropanoate + NAD(+) + CoA + H2O = propanoyl-CoA + hydrogencarbonate + NADH + H(+). The protein operates within polyol metabolism; myo-inositol degradation into acetyl-CoA; acetyl-CoA from myo-inositol: step 7/7. Its function is as follows. Catalyzes the oxidation of malonate semialdehyde (MSA) and methylmalonate semialdehyde (MMSA) into acetyl-CoA and propanoyl-CoA, respectively. Is involved in a myo-inositol catabolic pathway. Bicarbonate, and not CO2, is the end-product of the enzymatic reaction. The protein is Malonate-semialdehyde dehydrogenase 2 of Bacillus cereus (strain ZK / E33L).